A 264-amino-acid polypeptide reads, in one-letter code: S-adenosylmethionine decarboxylase proenzyme (264 aa).

The active-site Schiff-base intermediate with substrate; via pyruvic acid is the S112. S112 is modified (pyruvic acid (Ser); by autocatalysis). The Proton acceptor; for processing activity role is filled by H117. The Proton donor; for catalytic activity role is filled by C140.

This sequence belongs to the prokaryotic AdoMetDC family. Type 2 subfamily. In terms of assembly, heterooctamer of four alpha and four beta chains arranged as a tetramer of alpha/beta heterodimers. The cofactor is pyruvate. In terms of processing, is synthesized initially as an inactive proenzyme. Formation of the active enzyme involves a self-maturation process in which the active site pyruvoyl group is generated from an internal serine residue via an autocatalytic post-translational modification. Two non-identical subunits are generated from the proenzyme in this reaction, and the pyruvate is formed at the N-terminus of the alpha chain, which is derived from the carboxyl end of the proenzyme. The post-translation cleavage follows an unusual pathway, termed non-hydrolytic serinolysis, in which the side chain hydroxyl group of the serine supplies its oxygen atom to form the C-terminus of the beta chain, while the remainder of the serine residue undergoes an oxidative deamination to produce ammonia and the pyruvoyl group blocking the N-terminus of the alpha chain.

It catalyses the reaction S-adenosyl-L-methionine + H(+) = S-adenosyl 3-(methylsulfanyl)propylamine + CO2. Its pathway is amine and polyamine biosynthesis; S-adenosylmethioninamine biosynthesis; S-adenosylmethioninamine from S-adenosyl-L-methionine: step 1/1. Catalyzes the decarboxylation of S-adenosylmethionine to S-adenosylmethioninamine (dcAdoMet), the propylamine donor required for the synthesis of the polyamines spermine and spermidine from the diamine putrescine. This chain is S-adenosylmethionine decarboxylase proenzyme, found in Salmonella agona (strain SL483).